The following is a 67-amino-acid chain: MPKLKTKSGVKKRFKFTANGKVKHGVAGKRHRLISHNAKYIRQHRRTDVVSSTENRTIKAWAPYGLN.

The protein belongs to the bacterial ribosomal protein bL35 family.

In Zymomonas mobilis subsp. mobilis (strain ATCC 31821 / ZM4 / CP4), this protein is Large ribosomal subunit protein bL35.